Consider the following 246-residue polypeptide: MTDNTTAPLYSLRGLQLIGWRDMQHALNYLFADGQMKQGTLVAINAEKMLTAEDDPEVRALIDAAEFKYADGISVVRSVRKKFPQAQVSRVAGADLWEELMARAGKEGTPVFLVGGKPEVLAQTEAKLRAQWNVNIVGSQDGYFKPEQRQALFERIHASGAKIVTVAMGSPKQEILMRDCRVIHPQALYMGVGGTYDVFTGHVKRAPKMWQTLGLEWLYRLLSQPSRITRQLRLLRYLRWHYTGNL.

The protein belongs to the glycosyltransferase 26 family.

It carries out the reaction UDP-N-acetyl-alpha-D-mannosaminouronate + N-acetyl-alpha-D-glucosaminyl-di-trans,octa-cis-undecaprenyl diphosphate = beta-D-ManNAcA-(1-&gt;4)-alpha-D-GlcNAc-di-trans,octa-cis-undecaprenyl diphosphate + UDP + H(+). It participates in bacterial outer membrane biogenesis; enterobacterial common antigen biosynthesis. Its function is as follows. Catalyzes the synthesis of Und-PP-GlcNAc-ManNAcA (Lipid II), the second lipid-linked intermediate involved in enterobacterial common antigen (ECA) synthesis. The sequence is that of UDP-N-acetyl-D-mannosaminuronic acid transferase from Citrobacter koseri (strain ATCC BAA-895 / CDC 4225-83 / SGSC4696).